The chain runs to 312 residues: Peptide methionine sulfoxide reductase MsrA/MsrB 1 (312 aa).

Positions 1–155 (MAEIYLAGGC…PSGYCHIDVT (155 aa)) are peptide methionine sulfoxide reductase. Cysteine 10 is a catalytic residue. Residues 172 to 295 (QEVLKASLSE…NSASLRFVAK (124 aa)) form the MsrB domain. The active-site Nucleophile is cysteine 284.

The protein in the N-terminal section; belongs to the MsrA Met sulfoxide reductase family. This sequence in the C-terminal section; belongs to the MsrB Met sulfoxide reductase family.

The protein resides in the cell membrane. The catalysed reaction is L-methionyl-[protein] + [thioredoxin]-disulfide + H2O = L-methionyl-(S)-S-oxide-[protein] + [thioredoxin]-dithiol. It carries out the reaction [thioredoxin]-disulfide + L-methionine + H2O = L-methionine (S)-S-oxide + [thioredoxin]-dithiol. It catalyses the reaction L-methionyl-[protein] + [thioredoxin]-disulfide + H2O = L-methionyl-(R)-S-oxide-[protein] + [thioredoxin]-dithiol. Its function is as follows. Has an important function as a repair enzyme for proteins that have been inactivated by oxidation. Catalyzes the reversible oxidation-reduction of methionine sulfoxide in proteins to methionine. This is Peptide methionine sulfoxide reductase MsrA/MsrB 1 (msrAB1) from Streptococcus pneumoniae serotype 4 (strain ATCC BAA-334 / TIGR4).